Reading from the N-terminus, the 339-residue chain is Heat-inducible transcription repressor HrcA (339 aa).

This sequence belongs to the HrcA family.

Negative regulator of class I heat shock genes (grpE-dnaK-dnaJ and groELS operons). Prevents heat-shock induction of these operons. This chain is Heat-inducible transcription repressor HrcA, found in Nitrosospira multiformis (strain ATCC 25196 / NCIMB 11849 / C 71).